The primary structure comprises 146 residues: Hemoglobin subunit beta (146 aa).

Val1 bears the N-acetylvaline mark. A Globin domain is found at 2-146; that stretch reads HLTGEEKSAV…VATALAHKYH (145 aa). The residue at position 12 (Thr12) is a Phosphothreonine. Ser44 is modified (phosphoserine). Residue His63 coordinates heme b. Lys82 is modified (N6-acetyllysine). Residue His92 coordinates heme b. Residue Cys93 is modified to S-nitrosocysteine. Lys144 carries the post-translational modification N6-acetyllysine.

The protein belongs to the globin family. As to quaternary structure, heterotetramer of two alpha chains and two beta chains. As to expression, red blood cells.

Functionally, involved in oxygen transport from the lung to the various peripheral tissues. This is Hemoglobin subunit beta (HBB) from Tursiops truncatus (Atlantic bottle-nosed dolphin).